A 224-amino-acid polypeptide reads, in one-letter code: Putative adhesin RMA_1308 (224 aa).

A signal peptide spans 1–22 (MQKLLLIAATSATILSSSLSFA).

The chain is Putative adhesin RMA_1308 from Rickettsia massiliae (strain Mtu5).